The primary structure comprises 370 residues: tRNA N(3)-cytidine methyltransferase METTL2 (370 aa).

S-adenosyl-L-methionine contacts are provided by Trp-72, Tyr-76, Gly-181, Asp-206, Asp-232, Leu-233, and Ile-253.

This sequence belongs to the methyltransferase superfamily. METL family. Monomer.

It localises to the cytoplasm. The catalysed reaction is cytidine(32) in tRNA(Thr) + S-adenosyl-L-methionine = N(3)-methylcytidine(32) in tRNA(Thr) + S-adenosyl-L-homocysteine + H(+). It carries out the reaction cytidine(32) in tRNA(Arg)(CCU) + S-adenosyl-L-methionine = N(3)-methylcytidine(32) in tRNA(Arg)(CCU) + S-adenosyl-L-homocysteine + H(+). In terms of biological role, S-adenosyl-L-methionine-dependent methyltransferase that mediates N(3)-methylcytidine modification of residue 32 of the tRNA anticodon loop of tRNA(Thr)(UGU) and tRNA(Arg)(CCU). N(3)-methylcytidine methylation by METTL2 requires the N6-threonylcarbamoylation of tRNA (t6A37) by the EKC/KEOPS complex as prerequisite. The protein is tRNA N(3)-cytidine methyltransferase METTL2 (METTL2) of Gallus gallus (Chicken).